We begin with the raw amino-acid sequence, 101 residues long: MIKSELVQRIAEHNPHLYQRDVENIVNAILDEIVDALARGDRVELRGFGAFSVKHRPARAGRNPRTGAHVPVDQKSVPFFKTGKEMRERLNREPGNTDTGA.

It belongs to the bacterial histone-like protein family. As to quaternary structure, heterodimer of an alpha and a beta chain.

Its function is as follows. This protein is one of the two subunits of integration host factor, a specific DNA-binding protein that functions in genetic recombination as well as in transcriptional and translational control. This is Integration host factor subunit beta from Rhodopseudomonas palustris (strain BisB5).